Consider the following 228-residue polypeptide: 7-cyano-7-deazaguanine synthase (228 aa).

An ATP-binding site is contributed by 9–19 (LSGGPDSTTVL). 4 residues coordinate Zn(2+): cysteine 193, cysteine 203, cysteine 206, and cysteine 209.

It belongs to the QueC family. Zn(2+) is required as a cofactor.

The catalysed reaction is 7-carboxy-7-deazaguanine + NH4(+) + ATP = 7-cyano-7-deazaguanine + ADP + phosphate + H2O + H(+). Its pathway is purine metabolism; 7-cyano-7-deazaguanine biosynthesis. Functionally, catalyzes the ATP-dependent conversion of 7-carboxy-7-deazaguanine (CDG) to 7-cyano-7-deazaguanine (preQ(0)). This Rickettsia conorii (strain ATCC VR-613 / Malish 7) protein is 7-cyano-7-deazaguanine synthase.